The sequence spans 327 residues: Olfactory receptor 9G4 (327 aa).

Residues 1-43 (MIFPSHDSQAFTSVDMEVGNCTILTEFILLGFSADSQWQPILF) are Extracellular-facing. A glycan (N-linked (GlcNAc...) asparagine) is linked at asparagine 20. A helical transmembrane segment spans residues 44-64 (GVFLMLYLITLSGNMTLVILI). The Cytoplasmic segment spans residues 65–71 (RTDSHLH). A helical membrane pass occupies residues 72 to 92 (TPMYFFIGNLSFLDFWYTSVY). The Extracellular portion of the chain corresponds to 93 to 113 (TPKILASCVSEDKRISLAGCG). Cysteine 112 and cysteine 194 are oxidised to a cystine. A helical membrane pass occupies residues 114-134 (AQLFFSCVVAYTECYLLAAMA). The Cytoplasmic portion of the chain corresponds to 135 to 152 (YDRHAAICNPLLYSGTMS). A helical membrane pass occupies residues 153–173 (TALCTGLVAGSYIGGFLNAIA). Over 174–212 (HTANTFRLHFCGKNIIDHFFCDAPPLVKMSCTNTRVYEK) the chain is Extracellular. The helical transmembrane segment at 213–233 (VLLGVVGFTVLSSILAILISY) threads the bilayer. The Cytoplasmic segment spans residues 234–252 (VNILLAILRIHSASGRHKA). The helical transmembrane segment at 253–273 (FSTCASHLISVMLFYGSLLFM) threads the bilayer. At 274–286 (YSRPSSTYSLERD) the chain is on the extracellular side. A helical transmembrane segment spans residues 287-307 (KVAALFYTVINPLLNPLIYSL). The Cytoplasmic segment spans residues 308–327 (RNKDIKEAFRKATQTIQPQT).

It belongs to the G-protein coupled receptor 1 family.

It is found in the cell membrane. Odorant receptor. This is Olfactory receptor 9G4 (OR9G4) from Homo sapiens (Human).